Consider the following 488-residue polypeptide: UDP-N-acetylmuramate--L-alanine ligase (488 aa).

129-135 contributes to the ATP binding site; the sequence is GSHGKTT.

The protein belongs to the MurCDEF family.

It is found in the cytoplasm. It carries out the reaction UDP-N-acetyl-alpha-D-muramate + L-alanine + ATP = UDP-N-acetyl-alpha-D-muramoyl-L-alanine + ADP + phosphate + H(+). Its pathway is cell wall biogenesis; peptidoglycan biosynthesis. Its function is as follows. Cell wall formation. The sequence is that of UDP-N-acetylmuramate--L-alanine ligase from Prochlorococcus marinus (strain MIT 9313).